Consider the following 85-residue polypeptide: CRISPR-associated endoribonuclease Cas2 (85 aa).

Mg(2+) is bound at residue Asp8.

Belongs to the CRISPR-associated endoribonuclease Cas2 protein family. In terms of assembly, homodimer, forms a heterotetramer with a Cas1 homodimer. It depends on Mg(2+) as a cofactor.

In terms of biological role, CRISPR (clustered regularly interspaced short palindromic repeat), is an adaptive immune system that provides protection against mobile genetic elements (viruses, transposable elements and conjugative plasmids). CRISPR clusters contain sequences complementary to antecedent mobile elements and target invading nucleic acids. CRISPR clusters are transcribed and processed into CRISPR RNA (crRNA). Functions as a ssRNA-specific endoribonuclease. Involved in the integration of spacer DNA into the CRISPR cassette. The protein is CRISPR-associated endoribonuclease Cas2 of Thermococcus kodakarensis (strain ATCC BAA-918 / JCM 12380 / KOD1) (Pyrococcus kodakaraensis (strain KOD1)).